The primary structure comprises 361 residues: tRNA/tmRNA (uracil-C(5))-methyltransferase (361 aa).

Gln-185, Tyr-213, Asn-218, Glu-234, and Asp-294 together coordinate S-adenosyl-L-methionine. Catalysis depends on Cys-319, which acts as the Nucleophile. Glu-353 acts as the Proton acceptor in catalysis.

The protein belongs to the class I-like SAM-binding methyltransferase superfamily. RNA M5U methyltransferase family. TrmA subfamily.

The enzyme catalyses uridine(54) in tRNA + S-adenosyl-L-methionine = 5-methyluridine(54) in tRNA + S-adenosyl-L-homocysteine + H(+). It carries out the reaction uridine(341) in tmRNA + S-adenosyl-L-methionine = 5-methyluridine(341) in tmRNA + S-adenosyl-L-homocysteine + H(+). Its function is as follows. Dual-specificity methyltransferase that catalyzes the formation of 5-methyluridine at position 54 (m5U54) in all tRNAs, and that of position 341 (m5U341) in tmRNA (transfer-mRNA). This chain is tRNA/tmRNA (uracil-C(5))-methyltransferase, found in Pseudomonas entomophila (strain L48).